The sequence spans 362 residues: Cytochrome P450 monooxygenase-like protein avaN (362 aa).

Residues 3–23 (VILAIFIAAAGCLFSSWRIYW) form a helical membrane-spanning segment.

This sequence belongs to the cytochrome P450 family.

Its subcellular location is the membrane. Its pathway is secondary metabolite biosynthesis. In terms of biological role, cytochrome P450 monooxygenase-like protein; part of the cluster that mediates the biosynthesis of a highly modified cyclo-arginine-tryptophan dipeptide (cRW). The first step of the pathway is perfornmed by the arginine-containing cyclodipeptide synthase (RCPDS) avaA that acts as the scaffold-generating enzyme and is responsible for formation of the cyclo-Arg-Trp (cRW) diketopiperazine. AvaB then acts as a multifunctional flavoenzyme that is responsible for generating the cyclo-Arg-formylkynurenine DKP, which can be deformylated by avaC. AvaB then further catalyzes an additional N-oxidation followed by cyclization and dehydration. The next step is an N-acetylation of the guanidine group catalyzed by the arginine N-acetyltransferase avaD. The roles of the additional enzymes identified within the ava cluster still have to be determined. In Aspergillus versicolor, this protein is Cytochrome P450 monooxygenase-like protein avaN.